Here is a 427-residue protein sequence, read N- to C-terminus: Ribosome biogenesis protein WDR12 homolog (427 aa).

Positions 13–97 (LQLHLYTKQK…EDTVELEYVE (85 aa)) are ubiquitin-like (UBL) domain. 7 WD repeats span residues 109 to 146 (LHDD…KLTI), 148 to 190 (GHIA…NSVE), 197 to 236 (GHER…DGDS), 260 to 298 (GHRE…IKSE), 301 to 339 (GHKS…GTIV), 345 to 385 (GHTQ…APIF), and 389 to 427 (GHED…GEQK).

The protein belongs to the WD repeat WDR12/YTM1 family.

It is found in the nucleus. Its subcellular location is the nucleolus. The protein resides in the nucleoplasm. Required for maturation of ribosomal RNAs and formation of the large ribosomal subunit. This chain is Ribosome biogenesis protein WDR12 homolog, found in Aedes aegypti (Yellowfever mosquito).